The sequence spans 31 residues: Protamine CIII (31 aa).

A disordered region spans residues 1 to 31; it reads MPRRRRASRPVRRRRRPRVSRRRRRGGRRRR.

As to expression, testis.

The protein localises to the nucleus. It is found in the chromosome. In terms of biological role, protamines substitute for histones in the chromatin of sperm during the haploid phase of spermatogenesis. They compact sperm DNA into a highly condensed, stable and inactive complex. The polypeptide is Protamine CIII (Oncorhynchus mykiss (Rainbow trout)).